We begin with the raw amino-acid sequence, 142 residues long: Hemoglobin subunit alpha-1 (142 aa).

The region spanning 2–142 (LLSADDKKHI…VSSVLTSKYR (141 aa)) is the Globin domain. Histidine 59 serves as a coordination point for O2. Histidine 88 lines the heme b pocket.

It belongs to the globin family. Heterotetramer of two alpha chains and two beta chains. In terms of tissue distribution, red blood cells.

Involved in oxygen transport from the lung to the various peripheral tissues. This chain is Hemoglobin subunit alpha-1 (hba1), found in Xenopus borealis (Kenyan clawed frog).